The primary structure comprises 301 residues: Acetylglutamate kinase (301 aa).

Residues 70 to 71 (GG), R92, and N185 contribute to the substrate site.

It belongs to the acetylglutamate kinase family. ArgB subfamily.

The protein localises to the cytoplasm. It carries out the reaction N-acetyl-L-glutamate + ATP = N-acetyl-L-glutamyl 5-phosphate + ADP. Its pathway is amino-acid biosynthesis; L-arginine biosynthesis; N(2)-acetyl-L-ornithine from L-glutamate: step 2/4. Its function is as follows. Catalyzes the ATP-dependent phosphorylation of N-acetyl-L-glutamate. The chain is Acetylglutamate kinase from Synechococcus elongatus (strain ATCC 33912 / PCC 7942 / FACHB-805) (Anacystis nidulans R2).